Consider the following 200-residue polypeptide: ASI1-immunoprecipitated protein 1 (200 aa).

The region spanning 18-101 is the RRM domain; the sequence is RTVYVDELTP…RPVRACAAEP (84 aa).

In terms of assembly, component of the ASI1-AIPP1-EDM2 (AAE) RNA regulatory complex composed of at least AIPP1/EDM3, ASI1 and EDM2 and may contain CPL2, AIPP2 and AIPP3/BDT1. Binds directly to ASI1 and EDM2 and may function as a bridge protein between them. Co-associates with EDM2 to histone H3 lysine 9 dimethylation (H3K9me2)-marked chromatin and transcripts at a critical proximal polyadenylation site of RPP7 to hamper proximal transcript polyadeylation/termination.

The protein localises to the nucleus. Prevents gene silencing by suppressing CHG methylation as well as histone H3 lysine 9 dimethylation (H3K9me2) status at target loci. Collaboratively with ASI1 and EDM2, the AAE complex regulates alternative RNA processing (e.g. alternative splicing) and epigenetic silencing (e.g. H3K9me2) of intronic heterochromatin-containing genes as well as genic heterochromatin-containing genes by promoting distal 3' polyadenylation, thus being required for the accumulation of their full-length transcripts. May also modulate transposable elements (TE) expression. Mediates RPP7-dependent race-specific disease resistance by promoting histone H3 lysine 9 dimethylation (H3K9me2) at the proximal RPP7 polyadenylation site, thus controlling alternative polyadenylation of RPP7 immune receptor transcripts and facilitating 2-phosphoserine RNAPII occupancy. In cv. Columbia, required for RPP7-dependent disease resistance against the Hyaloperonospora arabidopsidis isolate Hiks1. The polypeptide is ASI1-immunoprecipitated protein 1 (Arabidopsis thaliana (Mouse-ear cress)).